We begin with the raw amino-acid sequence, 689 residues long: E3 ubiquitin-protein ligase RNF43 (689 aa).

The signal sequence occupies residues 1-27 (MNRARLQLASLWLLLTVTLQAVASAMG). Topologically, residues 28–191 (TTEREMDVKA…VQEQPKWLHH (164 aa)) are extracellular. Residues Asn56 and Asn86 are each glycosylated (N-linked (GlcNAc...) asparagine). Cys85 and Cys113 form a disulfide bridge. Residues 192–212 (DIWILLTVAGTVMFFVLYAVA) form a helical membrane-spanning segment. Residues 213-689 (RLLCRQPPPQ…EIEAVCEHAV (477 aa)) lie on the Cytoplasmic side of the membrane. The RING-type; atypical zinc finger occupies 268 to 308 (CAICLEEFTDGQELRILPCCHEYHLGCVDPWLRQNHTCPLC). 3 disordered regions span residues 386–430 (QMRT…HGSS), 445–467 (TSSSSVHSSQSNQEDSSPPALAS), and 492–639 (VHFH…MSES). 2 stretches are compositionally biased toward low complexity: residues 408–430 (DSSGYLPDDPGSDSSSGPCHGSS) and 446–461 (SSSSVHSSQSNQEDSS). Basic residues-rich tracts occupy residues 492 to 504 (VHFHQHRHHHYRR) and 512 to 523 (SHPHRSKRRTKV). A compositionally biased stretch (polar residues) spans 574–588 (QQSMPQAASVVQGSS).

Belongs to the ZNRF3 family.

It localises to the cell membrane. It is found in the endoplasmic reticulum membrane. Its subcellular location is the nucleus envelope. The enzyme catalyses S-ubiquitinyl-[E2 ubiquitin-conjugating enzyme]-L-cysteine + [acceptor protein]-L-lysine = [E2 ubiquitin-conjugating enzyme]-L-cysteine + N(6)-ubiquitinyl-[acceptor protein]-L-lysine.. The protein operates within protein modification; protein ubiquitination. Its function is as follows. E3 ubiquitin-protein ligase that acts as a negative regulator of the Wnt signaling pathway by mediating the ubiquitination, endocytosis and subsequent degradation of Wnt receptor complex components Frizzled. Acts on both canonical and non-canonical Wnt signaling pathway. Along with RSPO2 and ZNRF3, constitutes a master switch that governs limb specification. This is E3 ubiquitin-protein ligase RNF43 (rnf43) from Xenopus tropicalis (Western clawed frog).